The chain runs to 231 residues: Small ribosomal subunit protein uS3 (231 aa).

Positions 18-97 (VDEYLAKQFY…NPELNARVMA (80 aa)) constitute a KH type-2 domain.

The protein belongs to the universal ribosomal protein uS3 family. As to quaternary structure, part of the 30S ribosomal subunit.

In terms of biological role, binds the lower part of the 30S subunit head. This chain is Small ribosomal subunit protein uS3, found in Sulfolobus acidocaldarius (strain ATCC 33909 / DSM 639 / JCM 8929 / NBRC 15157 / NCIMB 11770).